Consider the following 92-residue polypeptide: Protein canopy homolog 1 (92 aa).

The protein belongs to the canopy family.

In Homo sapiens (Human), this protein is Protein canopy homolog 1 (CNPY1).